A 420-amino-acid chain; its full sequence is Tyrosine--tRNA ligase (420 aa).

Residue tyrosine 38 coordinates L-tyrosine. The 'HIGH' region motif lies at 43–52 (PTGDSLHIGH). Positions 169 and 173 each coordinate L-tyrosine. The 'KMSKS' region motif lies at 231-235 (KFGKS). Lysine 234 serves as a coordination point for ATP. One can recognise an S4 RNA-binding domain in the interval 353–419 (KNIVEFLVET…GKRKYTLVKI (67 aa)).

This sequence belongs to the class-I aminoacyl-tRNA synthetase family. TyrS type 1 subfamily. In terms of assembly, homodimer.

The protein resides in the cytoplasm. The catalysed reaction is tRNA(Tyr) + L-tyrosine + ATP = L-tyrosyl-tRNA(Tyr) + AMP + diphosphate + H(+). Catalyzes the attachment of tyrosine to tRNA(Tyr) in a two-step reaction: tyrosine is first activated by ATP to form Tyr-AMP and then transferred to the acceptor end of tRNA(Tyr). The sequence is that of Tyrosine--tRNA ligase from Lactobacillus johnsonii (strain CNCM I-12250 / La1 / NCC 533).